We begin with the raw amino-acid sequence, 105 residues long: U-scoloptoxin(10)-Sm3a (105 aa).

Positions 1–23 are cleaved as a signal peptide; the sequence is MYKFIFIFFTVFFLINIIEESXT.

The protein belongs to the scoloptoxin-10 family. In terms of processing, contains 3 disulfide bonds. Expressed by the venom gland.

The protein resides in the secreted. The protein is U-scoloptoxin(10)-Sm3a of Scolopendra morsitans (Tanzanian blue ringleg centipede).